Consider the following 103-residue polypeptide: N(4)-acetylcytidine amidohydrolase (103 aa).

The 96-residue stretch at Ile-6–Lys-101 folds into the ASCH domain. Lys-21 (proton acceptor) is an active-site residue. Thr-24 (nucleophile) is an active-site residue. The active-site Proton donor is Glu-74.

This sequence belongs to the N(4)-acetylcytidine amidohydrolase family.

The enzyme catalyses N(4)-acetylcytidine + H2O = cytidine + acetate + H(+). The catalysed reaction is N(4)-acetyl-2'-deoxycytidine + H2O = 2'-deoxycytidine + acetate + H(+). It catalyses the reaction N(4)-acetylcytosine + H2O = cytosine + acetate + H(+). Functionally, catalyzes the hydrolysis of N(4)-acetylcytidine (ac4C). In Escherichia fergusonii (strain ATCC 35469 / DSM 13698 / CCUG 18766 / IAM 14443 / JCM 21226 / LMG 7866 / NBRC 102419 / NCTC 12128 / CDC 0568-73), this protein is N(4)-acetylcytidine amidohydrolase (yqfB).